The primary structure comprises 149 residues: Transcriptional repressor NrdR (149 aa).

A zinc finger spans residues 3-34 (CPFCAAVDTKVIDSRLVSDGSQVRRRRQCLDC). The ATP-cone domain maps to 49–139 (PRVIKSDDVR…VYRSFEDIRE (91 aa)).

It belongs to the NrdR family. Zn(2+) is required as a cofactor.

Functionally, negatively regulates transcription of bacterial ribonucleotide reductase nrd genes and operons by binding to NrdR-boxes. This chain is Transcriptional repressor NrdR, found in Yersinia enterocolitica serotype O:8 / biotype 1B (strain NCTC 13174 / 8081).